A 1396-amino-acid chain; its full sequence is Major capsid protein (1396 aa).

Belongs to the herpesviridae major capsid protein family. Homomultimer. Makes the hexons and eleven out of twelve pentons. Interacts with triplex proteins 1/TRX1 and 2/TRX2; adjacent capsomers are linked together in groups of three by triplexes, heterotrimeric complexes composed of one molecule of TRX1 and two molecules of TRX2. Interacts with scaffold protein; this interaction allows efficient MCP transport to the host nucleus. Interacts with capsid vertex component 2/CVC2. Interacts with the small capsomere-interacting protein/SCP.

The protein localises to the virion. The protein resides in the host nucleus. Its function is as follows. Self-assembles to form an icosahedral capsid with a T=16 symmetry, about 200 nm in diameter, and consisting of 150 hexons and 12 pentons (total of 162 capsomers). Hexons form the edges and faces of the capsid and are each composed of six MCP molecules. In contrast, one penton is found at each of the 12 vertices. Eleven of the pentons are MCP pentamers, while the last vertex is occupied by the portal complex. The capsid is surrounded by a layer of proteinaceous material designated the tegument which, in turn, is enclosed in an envelope of host cell-derived lipids containing virus-encoded glycoproteins. The chain is Major capsid protein from Varicella-zoster virus (strain Dumas) (HHV-3).